Consider the following 490-residue polypeptide: Aspartyl/glutamyl-tRNA(Asn/Gln) amidotransferase subunit B (490 aa).

It belongs to the GatB/GatE family. GatB subfamily. In terms of assembly, heterotrimer of A, B and C subunits.

The catalysed reaction is L-glutamyl-tRNA(Gln) + L-glutamine + ATP + H2O = L-glutaminyl-tRNA(Gln) + L-glutamate + ADP + phosphate + H(+). It carries out the reaction L-aspartyl-tRNA(Asn) + L-glutamine + ATP + H2O = L-asparaginyl-tRNA(Asn) + L-glutamate + ADP + phosphate + 2 H(+). In terms of biological role, allows the formation of correctly charged Asn-tRNA(Asn) or Gln-tRNA(Gln) through the transamidation of misacylated Asp-tRNA(Asn) or Glu-tRNA(Gln) in organisms which lack either or both of asparaginyl-tRNA or glutaminyl-tRNA synthetases. The reaction takes place in the presence of glutamine and ATP through an activated phospho-Asp-tRNA(Asn) or phospho-Glu-tRNA(Gln). The polypeptide is Aspartyl/glutamyl-tRNA(Asn/Gln) amidotransferase subunit B (Prochlorococcus marinus subsp. pastoris (strain CCMP1986 / NIES-2087 / MED4)).